Consider the following 331-residue polypeptide: Ketol-acid reductoisomerase (NADP(+)) (331 aa).

A KARI N-terminal Rossmann domain is found at 2–182 (VEIYYDDDAN…GGTRAGALRT (181 aa)). Residues 25-28 (FGSQ), Ser-51, and Ser-53 contribute to the NADP(+) site. The active site involves His-108. Gly-134 is a binding site for NADP(+). The KARI C-terminal knotted domain occupies 183–328 (TFTEETETDL…GKLRPMMSWI (146 aa)). 4 residues coordinate Mg(2+): Asp-191, Glu-195, Glu-227, and Glu-231. A substrate-binding site is contributed by Ser-252.

This sequence belongs to the ketol-acid reductoisomerase family. Mg(2+) serves as cofactor.

It catalyses the reaction (2R)-2,3-dihydroxy-3-methylbutanoate + NADP(+) = (2S)-2-acetolactate + NADPH + H(+). It carries out the reaction (2R,3R)-2,3-dihydroxy-3-methylpentanoate + NADP(+) = (S)-2-ethyl-2-hydroxy-3-oxobutanoate + NADPH + H(+). It participates in amino-acid biosynthesis; L-isoleucine biosynthesis; L-isoleucine from 2-oxobutanoate: step 2/4. It functions in the pathway amino-acid biosynthesis; L-valine biosynthesis; L-valine from pyruvate: step 2/4. Involved in the biosynthesis of branched-chain amino acids (BCAA). Catalyzes an alkyl-migration followed by a ketol-acid reduction of (S)-2-acetolactate (S2AL) to yield (R)-2,3-dihydroxy-isovalerate. In the isomerase reaction, S2AL is rearranged via a Mg-dependent methyl migration to produce 3-hydroxy-3-methyl-2-ketobutyrate (HMKB). In the reductase reaction, this 2-ketoacid undergoes a metal-dependent reduction by NADPH to yield (R)-2,3-dihydroxy-isovalerate. This is Ketol-acid reductoisomerase (NADP(+)) from Parafrankia sp. (strain EAN1pec).